The chain runs to 133 residues: Ribosome-binding factor A (133 aa).

This sequence belongs to the RbfA family. As to quaternary structure, monomer. Binds 30S ribosomal subunits, but not 50S ribosomal subunits or 70S ribosomes.

It is found in the cytoplasm. In terms of biological role, one of several proteins that assist in the late maturation steps of the functional core of the 30S ribosomal subunit. Associates with free 30S ribosomal subunits (but not with 30S subunits that are part of 70S ribosomes or polysomes). Required for efficient processing of 16S rRNA. May interact with the 5'-terminal helix region of 16S rRNA. The sequence is that of Ribosome-binding factor A from Cytophaga hutchinsonii (strain ATCC 33406 / DSM 1761 / CIP 103989 / NBRC 15051 / NCIMB 9469 / D465).